The sequence spans 772 residues: Carnitine O-palmitoyltransferase 1, muscle isoform (772 aa).

Topologically, residues 1-47 are cytoplasmic; the sequence is MAEAHQAVAFQFTVTPDGVDFRLSREALRHIYLSGINSWKKRLIRIK. Residues 48 to 73 form a helical membrane-spanning segment; the sequence is NGILRGVYPGSPTSWLVVVMATVGSN. Over 74-102 the chain is Mitochondrial intermembrane; it reads YCKVDISMGLVHCIQRCLPTRYGSYGTPQ. Residues 103–122 traverse the membrane as a helical segment; sequence TETLLSMVIFSTGVWATGIF. Over 123–772 the chain is Cytoplasmic; that stretch reads LFRQTLKLLL…DLFKISKTDS (650 aa). His-473 serves as the catalytic Proton acceptor. Position 555–567 (555–567) interacts with CoA; the sequence is GKGLIKKCRTSPD. Residues Tyr-589 and Thr-602 each contribute to the (R)-carnitine site.

This sequence belongs to the carnitine/choline acetyltransferase family. High expression in heart, skeletal muscle and brown adipose tissue. Also expressed in white adipose tissue, but not in liver.

It is found in the mitochondrion outer membrane. It catalyses the reaction (R)-carnitine + hexadecanoyl-CoA = O-hexadecanoyl-(R)-carnitine + CoA. The protein operates within lipid metabolism; fatty acid beta-oxidation. Catalyzes the transfer of the acyl group of long-chain fatty acid-CoA conjugates onto carnitine, an essential step for the mitochondrial uptake of long-chain fatty acids and their subsequent beta-oxidation in the mitochondrion. This Rattus norvegicus (Rat) protein is Carnitine O-palmitoyltransferase 1, muscle isoform (Cpt1b).